The primary structure comprises 531 residues: Transcription termination/antitermination protein NusA (531 aa).

The S1 motif domain occupies glycine 165 to serine 235. The region spanning aspartate 340 to isoleucine 410 is the KH domain. Over residues glutamate 463–glutamine 475 the composition is skewed to basic and acidic residues. The tract at residues glutamate 463 to leucine 531 is disordered. Over residues proline 476–alanine 490 the composition is skewed to basic residues. The segment covering alanine 502–valine 512 has biased composition (basic and acidic residues). The segment covering aspartate 513–leucine 531 has biased composition (polar residues).

This sequence belongs to the NusA family. As to quaternary structure, monomer. Binds directly to the core enzyme of the DNA-dependent RNA polymerase and to nascent RNA.

The protein localises to the cytoplasm. In terms of biological role, participates in both transcription termination and antitermination. This is Transcription termination/antitermination protein NusA from Mycoplasma genitalium (strain ATCC 33530 / DSM 19775 / NCTC 10195 / G37) (Mycoplasmoides genitalium).